The chain runs to 369 residues: DNA replication and repair protein RecF (369 aa).

30 to 37 (GRNAQGKT) is a binding site for ATP.

This sequence belongs to the RecF family.

It localises to the cytoplasm. Its function is as follows. The RecF protein is involved in DNA metabolism; it is required for DNA replication and normal SOS inducibility. RecF binds preferentially to single-stranded, linear DNA. It also seems to bind ATP. The protein is DNA replication and repair protein RecF of Streptococcus agalactiae serotype III (strain NEM316).